A 234-amino-acid polypeptide reads, in one-letter code: Probable ascorbate-specific transmembrane electron transporter 1 (234 aa).

Over 1-9 (MGLGVRAAP) the chain is Cytoplasmic. A helical membrane pass occupies residues 10-30 (FTYVAHALAVAAATMVLVWCI). A Cytochrome b561 domain is found at 13–217 (VAHALAVAAA…FGASVVVAAV (205 aa)). Residues 31–48 (HFRGGLAFEATNKNLIFN) lie on the Extracellular side of the membrane. The helical transmembrane segment at 49–69 (VHPVLMLIGYIILGSEAIMVY) threads the bilayer. His50 is a binding site for heme b. 65-73 (AIMVYKVLP) contributes to the L-ascorbate binding site. Residues 70 to 82 (KVLPTWKHDTTKL) lie on the Cytoplasmic side of the membrane. A helical membrane pass occupies residues 83–103 (IHLILHAIALVFGAVGIYCAF). His84 and His118 together coordinate heme b. Topologically, residues 104–121 (KFHNESGIANLYSLHSWL) are extracellular. 114-123 (LYSLHSWLGI) lines the monodehydro-L-ascorbate radical pocket. A helical transmembrane segment spans residues 122 to 142 (GIGTICLYGIQWIFGFVAFFF). Residues 143 to 151 (PRASPSVRK) are Cytoplasmic-facing. The chain crosses the membrane as a helical span at residues 152–172 (GVLPWHILFGLFVYILALATA). His157 provides a ligand contact to heme b. Residues 173–194 (ELGFLEKLTFLQSSGLDKYGAE) are Extracellular-facing. A helical transmembrane segment spans residues 195–215 (AFLVNFTALIVVLFGASVVVA). At 216 to 234 (AVSPARVEEPHEYAPIPES) the chain is on the cytoplasmic side.

Heme b serves as cofactor.

It localises to the membrane. Functionally, two-heme-containing cytochrome. Catalyzes ascorbate-dependent trans-membrane electron transfer by utilizing a concerted H(+)/e(-) transfer mechanism. In Oryza sativa subsp. japonica (Rice), this protein is Probable ascorbate-specific transmembrane electron transporter 1.